The primary structure comprises 736 residues: Catalase-peroxidase 2 (736 aa).

A cross-link (tryptophyl-tyrosyl-methioninium (Trp-Tyr) (with M-253)) is located at residues 91 to 227; sequence WHSAGTYRMG…LAAVQMGLIY (137 aa). Catalysis depends on H92, which acts as the Proton acceptor. The tryptophyl-tyrosyl-methioninium (Tyr-Met) (with W-91) cross-link spans 227–253; that stretch reads YVNPEGPDGNPDPVAAAYDIREVFGRM. H268 serves as a coordination point for heme b.

Belongs to the peroxidase family. Peroxidase/catalase subfamily. In terms of assembly, homodimer or homotetramer. Requires heme b as cofactor. In terms of processing, formation of the three residue Trp-Tyr-Met cross-link is important for the catalase, but not the peroxidase activity of the enzyme.

The enzyme catalyses H2O2 + AH2 = A + 2 H2O. It carries out the reaction 2 H2O2 = O2 + 2 H2O. In terms of biological role, bifunctional enzyme with both catalase and broad-spectrum peroxidase activity. Shows peroxidase specificity towards odianisidine, ABTS and pyrogallol, but methoxyphenol and 2-chloronaphthol are not peroxidized. The chain is Catalase-peroxidase 2 from Burkholderia cenocepacia (strain ATCC BAA-245 / DSM 16553 / LMG 16656 / NCTC 13227 / J2315 / CF5610) (Burkholderia cepacia (strain J2315)).